The chain runs to 270 residues: Probable thioesterase BOA10 (270 aa).

Belongs to the AMT4 thioesterase family.

It functions in the pathway polyketide biosynthesis. Functionally, probable thioesterase; part of the gene cluster B that mediates the biosynthesis of botcinic acid and its botcinin derivatives, acetate-derived polyketides that contribute to virulence when combined with the sesquiterpene botrydial. Botcinic acid and its derivatives have been shown to induce chlorosis and necrosis during host plant infection, but also have antifungal activities. Two polyketide synthases, BOA6 and BOA9, are involved in the biosynthesis of botcinins. BOA6 mediates the formation of the per-methylated tetraketide core by condensation of four units of malonyl-CoA with one unit of acetyl-CoA, which would be methylated in activated methylene groups to yield a bicyclic acid intermediate that could then either be converted to botrylactone derivatives or lose the starter acetate unit through a retro-Claisen type C-C bond cleavage to yield botcinin derivatives. The second polyketide synthase, BOA9, is probably required for the biosynthesis of the tetraketide side chain of botcinins. The methyltransferase (MT) domain within BOA6 is probably responsible for the incorporation of four methyl groups. The trans-enoyl reductase BOA5 might take over the enoyl reductase function of BOA6 that misses an ER domain. The monooxygenases BOA2, BOA3 and BOA4 might be involved in further hydroxylations at C4, C5 and C8, whereas BOA7, close to BOA9, could potentially be involved in the hydroxylation at C4 in the side chain of botcinins. This Botryotinia fuckeliana (strain B05.10) (Noble rot fungus) protein is Probable thioesterase BOA10.